The sequence spans 342 residues: CMP-N-acetylneuraminate-beta-galactosamide-alpha-2,3-sialyltransferase 1 (342 aa).

Residues 1-10 lie on the Cytoplasmic side of the membrane; sequence MVTVRKRNVK. A helical; Signal-anchor for type II membrane protein membrane pass occupies residues 11–28; that stretch reads VFTFAFVLITVTSFLLNY. At 29 to 342 the chain is on the lumenal side; that stretch reads KHQVTMTTWD…IEKIKFFKGR (314 aa). 3 disulfides stabilise this stretch: C61–C66, C63–C141, and C144–C283. N81 is a glycosylation site (N-linked (GlcNAc...) asparagine). Q107 contacts substrate. Residue N116 is glycosylated (N-linked (GlcNAc...) asparagine). 2 residues coordinate substrate: N149 and N172. Residues N203 and N229 are each glycosylated (N-linked (GlcNAc...) asparagine). Residues Y232, Y268, G272, G292, and H301 each contribute to the substrate site. N-linked (GlcNAc...) asparagine glycosylation occurs at N306. H318 contacts substrate. N-linked (GlcNAc...) asparagine glycosylation occurs at N325.

It belongs to the glycosyltransferase 29 family. Post-translationally, the soluble form derives from the membrane form by proteolytic processing.

Its subcellular location is the golgi apparatus. It is found in the golgi stack membrane. The protein resides in the secreted. It catalyses the reaction a beta-D-galactosyl-(1-&gt;3)-N-acetyl-alpha-D-galactosaminyl derivative + CMP-N-acetyl-beta-neuraminate = an N-acetyl-alpha-neuraminyl-(2-&gt;3)-beta-D-galactosyl-(1-&gt;3)-N-acetyl-alpha-D-galactosaminyl derivative + CMP + H(+). The protein operates within protein modification; protein glycosylation. Its function is as follows. Responsible for the synthesis of the sequence NeuAc-alpha-2,3-Gal-beta-1,3-GalNAc- found on sugar chains O-linked to Thr or Ser and also as a terminal sequence on certain gangliosides. SIAT4A and SIAT4B sialylate the same acceptor substrates but exhibit different Km values. The sequence is that of CMP-N-acetylneuraminate-beta-galactosamide-alpha-2,3-sialyltransferase 1 (ST3GAL1) from Gallus gallus (Chicken).